A 204-amino-acid chain; its full sequence is MTTVITRKYRISRRLGVNLWGRAKDPVNKRKYPPGQHGILGFKKLSDFGKQFAAHKKFKFYYAISSKQLRRTFLDAYNRKGYTADNFIGILESRLSSVLYHSGLVPTIYSAKQLISHKHVTVNDKVVNISSYRVKPGDIIKIRERAAKIPVVVEAEQKQERKAPDYLEADSKEHSVKYLRSPQYSEVPYSADMEVNLVVEFYSR.

Residues 93 to 156 (SRLSSVLYHS…AKIPVVVEAE (64 aa)) enclose the S4 RNA-binding domain.

The protein belongs to the universal ribosomal protein uS4 family. As to quaternary structure, part of the 30S ribosomal subunit. Contacts protein S5. The interaction surface between S4 and S5 is involved in control of translational fidelity.

Functionally, one of the primary rRNA binding proteins, it binds directly to 16S rRNA where it nucleates assembly of the body of the 30S subunit. In terms of biological role, with S5 and S12 plays an important role in translational accuracy. This is Small ribosomal subunit protein uS4 from Wolbachia pipientis wMel.